The primary structure comprises 527 residues: Peptide chain release factor 3 (527 aa).

Positions 9–277 (AKRRTFAIIS…AVVNWAPKPL (269 aa)) constitute a tr-type G domain. Residues 18–25 (SHPDAGKT), 86–90 (DTPGH), and 140–143 (NKLD) each bind GTP.

The protein belongs to the TRAFAC class translation factor GTPase superfamily. Classic translation factor GTPase family. PrfC subfamily.

Its subcellular location is the cytoplasm. Its function is as follows. Increases the formation of ribosomal termination complexes and stimulates activities of RF-1 and RF-2. It binds guanine nucleotides and has strong preference for UGA stop codons. It may interact directly with the ribosome. The stimulation of RF-1 and RF-2 is significantly reduced by GTP and GDP, but not by GMP. This chain is Peptide chain release factor 3, found in Pseudomonas syringae pv. syringae (strain B728a).